The primary structure comprises 954 residues: Glycine dehydrogenase (decarboxylating) (954 aa).

Lys-704 carries the post-translational modification N6-(pyridoxal phosphate)lysine.

This sequence belongs to the GcvP family. In terms of assembly, the glycine cleavage system is composed of four proteins: P, T, L and H. Requires pyridoxal 5'-phosphate as cofactor.

It catalyses the reaction N(6)-[(R)-lipoyl]-L-lysyl-[glycine-cleavage complex H protein] + glycine + H(+) = N(6)-[(R)-S(8)-aminomethyldihydrolipoyl]-L-lysyl-[glycine-cleavage complex H protein] + CO2. In terms of biological role, the glycine cleavage system catalyzes the degradation of glycine. The P protein binds the alpha-amino group of glycine through its pyridoxal phosphate cofactor; CO(2) is released and the remaining methylamine moiety is then transferred to the lipoamide cofactor of the H protein. This chain is Glycine dehydrogenase (decarboxylating), found in Agrobacterium fabrum (strain C58 / ATCC 33970) (Agrobacterium tumefaciens (strain C58)).